We begin with the raw amino-acid sequence, 171 residues long: UPF0763 protein KHP_0657 (171 aa).

The protein belongs to the UPF0763 family.

The chain is UPF0763 protein KHP_0657 from Helicobacter pylori (strain 51).